A 384-amino-acid chain; its full sequence is Glycerol 3-phosphate oxidase (384 aa).

An N-terminal signal peptide occupies residues 1–17; it reads MQTIDVLIVGGGVIGTS. An FAD-binding site is contributed by isoleucine 14. The N-palmitoyl cysteine moiety is linked to residue cysteine 18. Cysteine 18 carries S-diacylglycerol cysteine lipidation. Residues glutamate 33, 42-43, and 47-49 contribute to the FAD site; these read TS and SGV. Residues serine 47 and histidine 51 each contribute to the sn-glycerol 3-phosphate site. Histidine 51 (proton acceptor) is an active-site residue. Valine 177 is an FAD binding site. Residues lysine 258 and arginine 320 each contribute to the sn-glycerol 3-phosphate site. 346 to 347 is a binding site for FAD; that stretch reads MK. Serine 348 is a binding site for sn-glycerol 3-phosphate. Threonine 352 is a binding site for FAD.

Monomer. FAD serves as cofactor.

The protein resides in the cytoplasm. The protein localises to the cell membrane. It catalyses the reaction sn-glycerol 3-phosphate + O2 = dihydroxyacetone phosphate + H2O2. It functions in the pathway polyol metabolism; glycerol degradation via glycerol kinase pathway; glycerone phosphate from sn-glycerol 3-phosphate (aerobic route): step 1/1. Its function is as follows. Catalyzes the oxidation of glycerol 3-phosphate to dihydroxyacetone phosphate (DHAP), with a reduction of O2 to H2O2. The formation of hydrogen peroxide by this enzyme is crucial for cytotoxic effects on host cells. Does not show any dehydrogenase activity with NAD(+). The protein is Glycerol 3-phosphate oxidase of Mycoplasma genitalium (strain ATCC 33530 / DSM 19775 / NCTC 10195 / G37) (Mycoplasmoides genitalium).